Reading from the N-terminus, the 285-residue chain is Putative sugar uptake protein lmo0169 (285 aa).

10 helical membrane passes run 5 to 24, 31 to 48, 53 to 71, 84 to 106, 116 to 135, 151 to 173, 178 to 195, 207 to 226, 232 to 254, and 263 to 282; these read IALIPAVMWGIMPLVVSKIG, IIGTTFGALAFAIGVFIF, YTATIIIASFVSGAFWSLG, VSKTMPLSTGMQLVGTSLFGVFA, LVLGFSALALIIIGIFLTSY, IITLLISSVGYVGYVVITRWFDI, AILPQAIGMVVAGLLFSI, WLNMIPGVMWATGNLALLFS, IATGFSLSQMGVVISTIGGILFL, and LILVIIGVVLVIIGGTMIGI.

It belongs to the GRP transporter (TC 2.A.7.5) family.

It localises to the cell membrane. This Listeria monocytogenes serovar 1/2a (strain ATCC BAA-679 / EGD-e) protein is Putative sugar uptake protein lmo0169.